The sequence spans 497 residues: Probable cytosol aminopeptidase (497 aa).

Positions 263 and 268 each coordinate Mn(2+). K275 is an active-site residue. Residues D286, D345, and E347 each coordinate Mn(2+). The active site involves R349.

The protein belongs to the peptidase M17 family. Mn(2+) is required as a cofactor.

It localises to the cytoplasm. It catalyses the reaction Release of an N-terminal amino acid, Xaa-|-Yaa-, in which Xaa is preferably Leu, but may be other amino acids including Pro although not Arg or Lys, and Yaa may be Pro. Amino acid amides and methyl esters are also readily hydrolyzed, but rates on arylamides are exceedingly low.. The enzyme catalyses Release of an N-terminal amino acid, preferentially leucine, but not glutamic or aspartic acids.. Functionally, presumably involved in the processing and regular turnover of intracellular proteins. Catalyzes the removal of unsubstituted N-terminal amino acids from various peptides. In Agrobacterium fabrum (strain C58 / ATCC 33970) (Agrobacterium tumefaciens (strain C58)), this protein is Probable cytosol aminopeptidase.